Reading from the N-terminus, the 43-residue chain is Cytochrome b559 subunit beta (43 aa).

A helical membrane pass occupies residues 18 to 34 (WLAIHGLAIPTVFFFGA). Histidine 22 contributes to the heme binding site.

It belongs to the PsbE/PsbF family. Heterodimer of an alpha subunit and a beta subunit. PSII is composed of 1 copy each of membrane proteins PsbA, PsbB, PsbC, PsbD, PsbE, PsbF, PsbH, PsbI, PsbJ, PsbK, PsbL, PsbM, PsbT, PsbY, PsbZ, Psb30/Ycf12, at least 3 peripheral proteins of the oxygen-evolving complex and a large number of cofactors. It forms dimeric complexes. Requires heme b as cofactor.

It is found in the plastid. The protein localises to the chloroplast thylakoid membrane. In terms of biological role, this b-type cytochrome is tightly associated with the reaction center of photosystem II (PSII). PSII is a light-driven water:plastoquinone oxidoreductase that uses light energy to abstract electrons from H(2)O, generating O(2) and a proton gradient subsequently used for ATP formation. It consists of a core antenna complex that captures photons, and an electron transfer chain that converts photonic excitation into a charge separation. The polypeptide is Cytochrome b559 subunit beta (Cyanidium caldarium (Red alga)).